A 677-amino-acid polypeptide reads, in one-letter code: Methionine--tRNA ligase (677 aa).

The short motif at 15–25 is the 'HIGH' region element; sequence PYANGSIHLGH. Zn(2+) contacts are provided by C146, C149, C159, and C162. The 'KMSKS' region signature appears at 333–337; that stretch reads KMSKS. Position 336 (K336) interacts with ATP. The region spanning 575 to 677 is the tRNA-binding domain; it reads DFAKVDLRVA…AGAKPGHQVK (103 aa).

This sequence belongs to the class-I aminoacyl-tRNA synthetase family. MetG type 1 subfamily. In terms of assembly, homodimer. Zn(2+) serves as cofactor.

Its subcellular location is the cytoplasm. It catalyses the reaction tRNA(Met) + L-methionine + ATP = L-methionyl-tRNA(Met) + AMP + diphosphate. In terms of biological role, is required not only for elongation of protein synthesis but also for the initiation of all mRNA translation through initiator tRNA(fMet) aminoacylation. The sequence is that of Methionine--tRNA ligase from Escherichia coli (strain UTI89 / UPEC).